A 139-amino-acid polypeptide reads, in one-letter code: Transcription antitermination protein NusB (139 aa).

This sequence belongs to the NusB family.

Its function is as follows. Involved in transcription antitermination. Required for transcription of ribosomal RNA (rRNA) genes. Binds specifically to the boxA antiterminator sequence of the ribosomal RNA (rrn) operons. The chain is Transcription antitermination protein NusB from Pectobacterium carotovorum subsp. carotovorum (strain PC1).